The sequence spans 282 residues: Aldo-keto reductase MUL_1987 (282 aa).

The active-site Proton donor is Tyr57. 6 residues coordinate NADPH: Leu197, Ile235, Ser238, Thr246, Asn247, and Arg273.

Belongs to the aldo/keto reductase family.

The polypeptide is Aldo-keto reductase MUL_1987 (Mycobacterium ulcerans (strain Agy99)).